A 439-amino-acid polypeptide reads, in one-letter code: Alpha-1,3-mannosyl-glycoprotein 4-beta-N-acetylglucosaminyltransferase-like protein MGAT4E (439 aa).

The protein operates within protein modification; protein glycosylation. Functionally, glycosyltransferase-like protein that may participate in the transfer of N-acetylglucosamine (GlcNAc) to the core mannose residues of N-linked glycans. The protein is Alpha-1,3-mannosyl-glycoprotein 4-beta-N-acetylglucosaminyltransferase-like protein MGAT4E of Mus musculus (Mouse).